The following is a 305-amino-acid chain: Ornithine carbamoyltransferase (305 aa).

Residues 52-55 (STRT), Q79, R103, and 130-133 (HPLQ) each bind carbamoyl phosphate. L-ornithine contacts are provided by residues N162, D224, and 228-229 (SM). Carbamoyl phosphate is bound by residues 264–265 (CL) and R292.

This sequence belongs to the aspartate/ornithine carbamoyltransferase superfamily. OTCase family.

Its subcellular location is the cytoplasm. The enzyme catalyses carbamoyl phosphate + L-ornithine = L-citrulline + phosphate + H(+). Its pathway is amino-acid biosynthesis; L-arginine biosynthesis; L-arginine from L-ornithine and carbamoyl phosphate: step 1/3. Its function is as follows. Reversibly catalyzes the transfer of the carbamoyl group from carbamoyl phosphate (CP) to the N(epsilon) atom of ornithine (ORN) to produce L-citrulline. The sequence is that of Ornithine carbamoyltransferase from Pyrobaculum aerophilum (strain ATCC 51768 / DSM 7523 / JCM 9630 / CIP 104966 / NBRC 100827 / IM2).